A 115-amino-acid chain; its full sequence is Ribonuclease P protein component (115 aa).

The protein belongs to the RnpA family. Consists of a catalytic RNA component (M1 or rnpB) and a protein subunit.

It carries out the reaction Endonucleolytic cleavage of RNA, removing 5'-extranucleotides from tRNA precursor.. RNaseP catalyzes the removal of the 5'-leader sequence from pre-tRNA to produce the mature 5'-terminus. It can also cleave other RNA substrates such as 4.5S RNA. The protein component plays an auxiliary but essential role in vivo by binding to the 5'-leader sequence and broadening the substrate specificity of the ribozyme. This is Ribonuclease P protein component from Bacillus cereus (strain AH187).